Here is a 229-residue protein sequence, read N- to C-terminus: Uracil-DNA glycosylase (229 aa).

The Proton acceptor role is filled by Asp64.

It belongs to the uracil-DNA glycosylase (UDG) superfamily. UNG family.

The protein localises to the cytoplasm. The enzyme catalyses Hydrolyzes single-stranded DNA or mismatched double-stranded DNA and polynucleotides, releasing free uracil.. In terms of biological role, excises uracil residues from the DNA which can arise as a result of misincorporation of dUMP residues by DNA polymerase or due to deamination of cytosine. The protein is Uracil-DNA glycosylase of Klebsiella pneumoniae (strain 342).